Consider the following 83-residue polypeptide: ATP synthase subunit c (83 aa).

The next 2 helical transmembrane spans lie at 9 to 29 (LICV…GIGI) and 51 to 71 (MVFM…GLVI).

This sequence belongs to the ATPase C chain family. In terms of assembly, F-type ATPases have 2 components, F(1) - the catalytic core - and F(0) - the membrane proton channel. F(1) has five subunits: alpha(3), beta(3), gamma(1), delta(1), epsilon(1). F(0) has three main subunits: a(1), b(2) and c(10-14). The alpha and beta chains form an alternating ring which encloses part of the gamma chain. F(1) is attached to F(0) by a central stalk formed by the gamma and epsilon chains, while a peripheral stalk is formed by the delta and b chains.

Its subcellular location is the cell inner membrane. Its function is as follows. F(1)F(0) ATP synthase produces ATP from ADP in the presence of a proton or sodium gradient. F-type ATPases consist of two structural domains, F(1) containing the extramembraneous catalytic core and F(0) containing the membrane proton channel, linked together by a central stalk and a peripheral stalk. During catalysis, ATP synthesis in the catalytic domain of F(1) is coupled via a rotary mechanism of the central stalk subunits to proton translocation. Functionally, key component of the F(0) channel; it plays a direct role in translocation across the membrane. A homomeric c-ring of between 10-14 subunits forms the central stalk rotor element with the F(1) delta and epsilon subunits. This is ATP synthase subunit c from Desulfotalea psychrophila (strain LSv54 / DSM 12343).